The following is a 134-amino-acid chain: Gastrin-releasing peptide (134 aa).

Residues 1–23 form the signal peptide; sequence MRGREVPLVLLALVLCLAPRGWA. At Met-50 the chain carries Methionine amide. Residues 54–134 constitute a propeptide that is removed on maturation; the sequence is SVAESPQLHE…QHEGRNPQLN (81 aa). Residues 95 to 134 are disordered; that stretch reads GHQMPPWEPLSIHQPAWDSEDVSNFKDTGPQHEGRNPQLN. Over residues 123–134 the composition is skewed to basic and acidic residues; the sequence is GPQHEGRNPQLN.

The protein belongs to the bombesin/neuromedin-B/ranatensin family. In terms of tissue distribution, detected in adrenal medulla (at protein level).

The protein resides in the cytoplasmic vesicle. The protein localises to the secretory vesicle lumen. It localises to the secreted. Its subcellular location is the cell projection. It is found in the neuron projection. Functionally, stimulates the release of gastrin and other gastrointestinal hormones. Contributes to the perception of prurient stimuli and to the transmission of itch signals in the spinal cord that promote scratching behavior. Contributes primarily to nonhistaminergic itch sensation. In one study, shown to act in the amygdala as part of an inhibitory network which inhibits memory specifically related to learned fear. In another study, shown to act on vasoactive intestinal peptide (VIP)-expressing cells in the auditory cortex, most likely via extrasynaptic diffusion from local and long-range sources, to mediate disinhibition of glutamatergic cells via VIP cell-specific GRPR signaling which leads to enhanced auditory fear memories. Contributes to the regulation of food intake. Inhibits voltage-gated sodium channels but enhances voltage-gated potassium channels in hippocampal neurons. Induces sighing by acting directly on the pre-Botzinger complex, a cluster of several thousand neurons in the ventrolateral medulla responsible for inspiration during respiratory activity. In terms of biological role, induces an itch response through activation of receptors present on mast cells, triggering mast cell degranulation. The polypeptide is Gastrin-releasing peptide (GRP) (Bos taurus (Bovine)).